A 488-amino-acid chain; its full sequence is Glutamyl-tRNA(Gln) amidotransferase subunit A (488 aa).

Active-site charge relay system residues include K77 and S152. The active-site Acyl-ester intermediate is the S176.

This sequence belongs to the amidase family. GatA subfamily. In terms of assembly, heterotrimer of A, B and C subunits.

It catalyses the reaction L-glutamyl-tRNA(Gln) + L-glutamine + ATP + H2O = L-glutaminyl-tRNA(Gln) + L-glutamate + ADP + phosphate + H(+). Functionally, allows the formation of correctly charged Gln-tRNA(Gln) through the transamidation of misacylated Glu-tRNA(Gln) in organisms which lack glutaminyl-tRNA synthetase. The reaction takes place in the presence of glutamine and ATP through an activated gamma-phospho-Glu-tRNA(Gln). The protein is Glutamyl-tRNA(Gln) amidotransferase subunit A of Streptococcus sanguinis (strain SK36).